Reading from the N-terminus, the 868-residue chain is mRNA-capping enzyme (868 aa).

The active-site N6-GMP-lysine intermediate is lysine 282. The mRNA cap 0 methyltransferase domain maps to 594–868 (GIYRAQTALI…LFGFICLRKN (275 aa)). Residues lysine 607, glycine 624, aspartate 646, and 710 to 712 (LFI) each bind S-adenosyl-L-methionine.

In the N-terminal section; belongs to the dsDNA virus mRNA guanylyltransferase family. The protein in the C-terminal section; belongs to the class I-like SAM-binding methyltransferase superfamily. mRNA cap 0 methyltransferase family. As to quaternary structure, part of the viral DNA-directed RNA polymerase that consists of 8 polII-like subunits (RPB1, RPB2, RPB3, RPB5, RPB6, RPB7, RPB9, RPB10), a capping enzyme and a termination factor.

It is found in the virion. The enzyme catalyses a 5'-end triphospho-ribonucleoside in mRNA + H2O = a 5'-end diphospho-ribonucleoside in mRNA + phosphate + H(+). It catalyses the reaction a 5'-end diphospho-ribonucleoside in mRNA + GTP + H(+) = a 5'-end (5'-triphosphoguanosine)-ribonucleoside in mRNA + diphosphate. The catalysed reaction is a 5'-end (5'-triphosphoguanosine)-ribonucleoside in mRNA + S-adenosyl-L-methionine = a 5'-end (N(7)-methyl 5'-triphosphoguanosine)-ribonucleoside in mRNA + S-adenosyl-L-homocysteine. The protein operates within mRNA processing; mRNA capping. Functionally, probably catalyzes the second reaction in the mRNA cap formation pathway. Forms a covalent complex with GTP. The polypeptide is mRNA-capping enzyme (African swine fever virus (isolate Tick/South Africa/Pretoriuskop Pr4/1996) (ASFV)).